Here is a 416-residue protein sequence, read N- to C-terminus: CBL-interacting serine/threonine-protein kinase 21 (416 aa).

The Protein kinase domain occupies 12–264; it reads YEIGRTIGEG…AEIIIKDSWF (253 aa). Residues 18–26 and Lys-41 contribute to the ATP site; that span reads IGEGNFAKV. Asp-134 functions as the Proton acceptor in the catalytic mechanism. The tract at residues 152-178 is activation loop; that stretch reads DFGLSAVPKSGDMLSTACGSPCYIAPE. Ser-156 is subject to Phosphoserine. At Thr-167 the chain carries Phosphothreonine. An NAF domain is found at 291–315; it reads ASSNFINAFQIIAMSSDLDLSGLFE. A PPI region spans residues 321-351; sequence RYKTRIGSKNTAQETIKKIEAAATYVSLSVE.

The protein belongs to the protein kinase superfamily. CAMK Ser/Thr protein kinase family. SNF1 subfamily. As to quaternary structure, interacts with CBL9. The cofactor is Mn(2+).

It carries out the reaction L-seryl-[protein] + ATP = O-phospho-L-seryl-[protein] + ADP + H(+). The enzyme catalyses L-threonyl-[protein] + ATP = O-phospho-L-threonyl-[protein] + ADP + H(+). Functionally, CIPK serine-threonine protein kinases interact with CBL proteins. Binding of a CBL protein to the regulatory NAF domain of CIPK protein lead to the activation of the kinase in a calcium-dependent manner. This Arabidopsis thaliana (Mouse-ear cress) protein is CBL-interacting serine/threonine-protein kinase 21 (CIPK21).